A 457-amino-acid chain; its full sequence is Tubulin alpha chain (457 aa).

Residues Q12, E77, S146, G150, T151, T186, N213, and N235 each coordinate GTP. E77 lines the Mg(2+) pocket.

It belongs to the tubulin family. In terms of assembly, dimer of alpha and beta chains. A typical microtubule is a hollow water-filled tube with an outer diameter of 25 nm and an inner diameter of 15 nM. Alpha-beta heterodimers associate head-to-tail to form protofilaments running lengthwise along the microtubule wall with the beta-tubulin subunit facing the microtubule plus end conferring a structural polarity. Microtubules usually have 13 protofilaments but different protofilament numbers can be found in some organisms and specialized cells. The cofactor is Mg(2+). Undergoes a tyrosination/detyrosination cycle, the cyclic removal and re-addition of a C-terminal tyrosine residue by the enzymes tubulin tyrosine carboxypeptidase (TTCP) and tubulin tyrosine ligase (TTL), respectively.

The protein localises to the cytoplasm. It is found in the cytoskeleton. The enzyme catalyses GTP + H2O = GDP + phosphate + H(+). Its function is as follows. Tubulin is the major constituent of microtubules, a cylinder consisting of laterally associated linear protofilaments composed of alpha- and beta-tubulin heterodimers. Microtubules grow by the addition of GTP-tubulin dimers to the microtubule end, where a stabilizing cap forms. Below the cap, tubulin dimers are in GDP-bound state, owing to GTPase activity of alpha-tubulin. The polypeptide is Tubulin alpha chain (tubA) (Dictyostelium discoideum (Social amoeba)).